Consider the following 271-residue polypeptide: uncharacterized protein (271 aa).

The segment at 1 to 202 (MLNSPGTRRP…APSSALSHQG (202 aa)) is disordered. Positions 10 to 23 (PVKEAQKYGEDSQK) are enriched in basic and acidic residues. Low complexity-rich tracts occupy residues 33–50 (RSSVTTLSASALSDSSSP) and 59–73 (GRPSTPARAPATSAP). The segment covering 92-101 (TRSSANQLPQ) has biased composition (polar residues). A compositionally biased stretch (basic residues) spans 121–142 (LRRRSHGDRCVPRSRRRPRPRP).

This is an uncharacterized protein from Homo sapiens (Human).